The chain runs to 216 residues: Imidazole glycerol phosphate synthase subunit HisH (216 aa).

Positions 2-216 constitute a Glutamine amidotransferase type-1 domain; sequence SIAIIDYGSG…LISNFLRWKP (215 aa). C88 functions as the Nucleophile in the catalytic mechanism. Active-site residues include H196 and E198.

In terms of assembly, heterodimer of HisH and HisF.

Its subcellular location is the cytoplasm. It catalyses the reaction 5-[(5-phospho-1-deoxy-D-ribulos-1-ylimino)methylamino]-1-(5-phospho-beta-D-ribosyl)imidazole-4-carboxamide + L-glutamine = D-erythro-1-(imidazol-4-yl)glycerol 3-phosphate + 5-amino-1-(5-phospho-beta-D-ribosyl)imidazole-4-carboxamide + L-glutamate + H(+). The catalysed reaction is L-glutamine + H2O = L-glutamate + NH4(+). It functions in the pathway amino-acid biosynthesis; L-histidine biosynthesis; L-histidine from 5-phospho-alpha-D-ribose 1-diphosphate: step 5/9. Its function is as follows. IGPS catalyzes the conversion of PRFAR and glutamine to IGP, AICAR and glutamate. The HisH subunit catalyzes the hydrolysis of glutamine to glutamate and ammonia as part of the synthesis of IGP and AICAR. The resulting ammonia molecule is channeled to the active site of HisF. This Bradyrhizobium diazoefficiens (strain JCM 10833 / BCRC 13528 / IAM 13628 / NBRC 14792 / USDA 110) protein is Imidazole glycerol phosphate synthase subunit HisH.